Here is a 202-residue protein sequence, read N- to C-terminus: Peptidyl-tRNA hydrolase (202 aa).

Y17 provides a ligand contact to tRNA. Residue H22 is the Proton acceptor of the active site. Residues F76, N78, and N124 each coordinate tRNA.

The protein belongs to the PTH family. As to quaternary structure, monomer.

It localises to the cytoplasm. The enzyme catalyses an N-acyl-L-alpha-aminoacyl-tRNA + H2O = an N-acyl-L-amino acid + a tRNA + H(+). Its function is as follows. Hydrolyzes ribosome-free peptidyl-tRNAs (with 1 or more amino acids incorporated), which drop off the ribosome during protein synthesis, or as a result of ribosome stalling. Catalyzes the release of premature peptidyl moieties from peptidyl-tRNA molecules trapped in stalled 50S ribosomal subunits, and thus maintains levels of free tRNAs and 50S ribosomes. The sequence is that of Peptidyl-tRNA hydrolase from Nitratidesulfovibrio vulgaris (strain DSM 19637 / Miyazaki F) (Desulfovibrio vulgaris).